A 137-amino-acid chain; its full sequence is Large ribosomal subunit protein uL16 (137 aa).

Residues Met-1–Lys-14 are compositionally biased toward basic residues. The segment at Met-1–Thr-22 is disordered.

It belongs to the universal ribosomal protein uL16 family. Part of the 50S ribosomal subunit.

In terms of biological role, binds 23S rRNA and is also seen to make contacts with the A and possibly P site tRNAs. This chain is Large ribosomal subunit protein uL16, found in Dechloromonas aromatica (strain RCB).